A 98-amino-acid polypeptide reads, in one-letter code: MKTISEIKDILRKHKKILKEKYKVKSIAIFGSYARNEQTEKSDIDILVEFYETPDYLKFFELEDYLSDLLGIKVDLVIKGAIKNPYIKKSIEEDLIYV.

Residues 31-45 (GSYARNEQTEKSDID) carry the GSX(10)DXD motif motif. Residues Asp-43, Asp-45, and Asp-75 each coordinate Mg(2+).

Belongs to the MntA antitoxin family. As to quaternary structure, probably forms a complex with cognate toxin MJ0127. The cofactor is Mg(2+).

The enzyme catalyses L-tyrosyl-[protein] + ATP = O-(5'-adenylyl)-L-tyrosyl-[protein] + diphosphate. It carries out the reaction O-(5'-adenylyl)-L-tyrosyl-[protein] + ATP = O-[5'-(adenylyl-(5'-&gt;3')-adenylyl)]-L-tyrosyl-[protein] + diphosphate. Its function is as follows. Probable antitoxin component of a putative type VII toxin-antitoxin (TA) system. Neutralizes cognate toxic MJ0127 by di-AMPylation. The chain is Putative protein adenylyltransferase MJ0128 from Methanocaldococcus jannaschii (strain ATCC 43067 / DSM 2661 / JAL-1 / JCM 10045 / NBRC 100440) (Methanococcus jannaschii).